Here is a 434-residue protein sequence, read N- to C-terminus: Arrestin domain-containing protein 1 (434 aa).

Residues 292–349 (SPCPGRESSPGTLSLVVPSAPPQEEAEAVASGPHFSDPVSLSTKSHSQQQPLSAPLGS) are disordered. Over residues 330–343 (VSLSTKSHSQQQPL) the composition is skewed to polar residues. 2 short sequence motifs (PPxY motif) span residues 401–404 (PPEY) and 414–417 (PPSY).

Belongs to the arrestin family. As to quaternary structure, interacts (via PPxY motifs) with ITCH (via WW domains); the interaction is direct and participates in the recruitment of the ubiquitin-protein ligase ITCH to the NOTCH1 receptor. Interacts with ARRB1 and ARRB2; the interaction is direct. Interacts with TSG101; may recruit TSG101 to the plasma membrane. Interacts (via PPxY motifs) with WWP2 (via WW domains); ubiquitinates ARRDC1. Interacts with SLC11A2; controls the incorporation of SLC11A2 into extracellular vesicles through an ubiquitination-dependent mechanism. Interacts with WWP1 (via WW domains). Interacts with NEDD4 (via WW domains). Interacts with PDCD6IP. Ubiquitinated. Ubiquitination by WWP2; promotes localization to extracellular microvesicles. Ubiquitinated by WWP1.

Its subcellular location is the cell membrane. Its function is as follows. Functions as an adapter recruiting ubiquitin-protein ligases to their specific substrates. Through an ubiquitination-dependent mechanism plays for instance a role in the incorporation of SLC11A2 into extracellular vesicles. More generally, plays a role in the extracellular transport of proteins between cells through the release in the extracellular space of microvesicles. By participating to the ITCH-mediated ubiquitination and subsequent degradation of NOTCH1, negatively regulates the NOTCH signaling pathway. This Mus musculus (Mouse) protein is Arrestin domain-containing protein 1.